The primary structure comprises 500 residues: L-arabinose isomerase (500 aa).

4 residues coordinate Mn(2+): Glu-306, Glu-333, His-350, and His-450.

Belongs to the arabinose isomerase family. In terms of assembly, homohexamer. Mn(2+) serves as cofactor.

The catalysed reaction is beta-L-arabinopyranose = L-ribulose. It functions in the pathway carbohydrate degradation; L-arabinose degradation via L-ribulose; D-xylulose 5-phosphate from L-arabinose (bacterial route): step 1/3. Catalyzes the conversion of L-arabinose to L-ribulose. The polypeptide is L-arabinose isomerase (Salmonella newport (strain SL254)).